The chain runs to 500 residues: Taxoid 7-beta-hydroxylase (500 aa).

A helical membrane pass occupies residues 24–44 (PAILSTALTAIAGIIVLLVIT). C446 provides a ligand contact to heme.

The protein belongs to the cytochrome P450 family.

The protein localises to the microsome membrane. It catalyses the reaction taxusin + reduced [NADPH--hemoprotein reductase] + O2 = 7beta-hydroxytaxusin + oxidized [NADPH--hemoprotein reductase] + H2O + H(+). The enzyme catalyses 2alpha-hydroxytaxusin + reduced [NADPH--hemoprotein reductase] + O2 = 2alpha,7beta-dihydroxytaxusin + oxidized [NADPH--hemoprotein reductase] + H2O + H(+). The catalysed reaction is 7beta-hydroxytaxusin + reduced [NADPH--hemoprotein reductase] + O2 = 2alpha,7beta-dihydroxytaxusin + oxidized [NADPH--hemoprotein reductase] + H2O + H(+). It functions in the pathway alkaloid biosynthesis; taxol biosynthesis. In terms of biological role, catalyzes the conversion of taxusin to 7-beta-hydroxytaxusin in taxol biosynthesis. Catalyzes the conversion of 2-alpha-hydroxytaxusin to 2-alpha-7-beta-hydroxytaxusin in taxol biosynthesis. The sequence is that of Taxoid 7-beta-hydroxylase from Taxus cuspidata (Japanese yew).